Here is a 606-residue protein sequence, read N- to C-terminus: UPF0329 protein ECU06_0090 (606 aa).

The segment at 317-401 is disordered; sequence KKEEERREEE…SREACSKERN (85 aa). A compositionally biased stretch (basic and acidic residues) spans 328 to 353; the sequence is EKKRKEEVVQRNVEELLRGEEEEKKG. Over residues 354–367 the composition is skewed to basic residues; sequence AKAKRKSKKKKKGS. Over residues 381–401 the composition is skewed to basic and acidic residues; that stretch reads SENREAQEMEDSREACSKERN.

This sequence belongs to the UPF0329 family.

The protein is UPF0329 protein ECU06_0090 of Encephalitozoon cuniculi (strain GB-M1) (Microsporidian parasite).